The primary structure comprises 375 residues: Homoserine O-succinyltransferase (375 aa).

Residues 48–358 (NAVLVCHALS…DAGHDSFLLD (311 aa)) form the AB hydrolase-1 domain. Ser154 (nucleophile) is an active-site residue. A substrate-binding site is contributed by Arg224. Residues Asp319 and His352 contribute to the active site. Asp353 contributes to the substrate binding site.

It belongs to the AB hydrolase superfamily. MetX family. In terms of assembly, homodimer.

It localises to the cytoplasm. The catalysed reaction is L-homoserine + succinyl-CoA = O-succinyl-L-homoserine + CoA. It participates in amino-acid biosynthesis; L-methionine biosynthesis via de novo pathway; O-succinyl-L-homoserine from L-homoserine: step 1/1. In terms of biological role, transfers a succinyl group from succinyl-CoA to L-homoserine, forming succinyl-L-homoserine. The chain is Homoserine O-succinyltransferase from Aromatoleum aromaticum (strain DSM 19018 / LMG 30748 / EbN1) (Azoarcus sp. (strain EbN1)).